Consider the following 243-residue polypeptide: Protein HUA2 (243 aa).

The protein localises to the cytoplasm. May have a role in actin patch assembly. The chain is Protein HUA2 (HUA2) from Saccharomyces cerevisiae (strain ATCC 204508 / S288c) (Baker's yeast).